A 447-amino-acid chain; its full sequence is Signal recognition particle 54 kDa protein (447 aa).

GTP-binding positions include 103-110 (GVQGSGKT), 185-189 (DTAGR), and 245-248 (TKMD).

The protein belongs to the GTP-binding SRP family. SRP54 subfamily. As to quaternary structure, part of the signal recognition particle protein translocation system, which is composed of SRP and FtsY. Archaeal SRP consists of a 7S RNA molecule of 300 nucleotides and two protein subunits: SRP54 and SRP19.

Its subcellular location is the cytoplasm. It catalyses the reaction GTP + H2O = GDP + phosphate + H(+). Functionally, involved in targeting and insertion of nascent membrane proteins into the cytoplasmic membrane. Binds to the hydrophobic signal sequence of the ribosome-nascent chain (RNC) as it emerges from the ribosomes. The SRP-RNC complex is then targeted to the cytoplasmic membrane where it interacts with the SRP receptor FtsY. The chain is Signal recognition particle 54 kDa protein from Saccharolobus islandicus (strain L.S.2.15 / Lassen #1) (Sulfolobus islandicus).